A 447-amino-acid chain; its full sequence is GTPase Der (447 aa).

EngA-type G domains are found at residues 4–165 and 180–357; these read KIIT…PEEE and LQIV…KIWN. Residues 10–17, 57–61, 119–122, 186–193, 233–237, and 298–301 contribute to the GTP site; these read GRPNVGKS, DTPGL, NKCE, GRPNAGKS, DTAGL, and NKWD. One can recognise a KH-like domain in the interval 358–443; it reads KKITTSKLNE…PIRFTYVKTK (86 aa).

It belongs to the TRAFAC class TrmE-Era-EngA-EngB-Septin-like GTPase superfamily. EngA (Der) GTPase family. Associates with the 50S ribosomal subunit.

Functionally, GTPase that plays an essential role in the late steps of ribosome biogenesis. The chain is GTPase Der from Rickettsia felis (strain ATCC VR-1525 / URRWXCal2) (Rickettsia azadi).